We begin with the raw amino-acid sequence, 249 residues long: Ditrans,polycis-undecaprenyl-diphosphate synthase ((2E,6E)-farnesyl-diphosphate specific) (249 aa).

The active site involves Asp-26. Residue Asp-26 coordinates Mg(2+). Substrate contacts are provided by residues 27 to 30 (GNGR), Trp-31, Arg-39, His-43, and 71 to 73 (SRE). Catalysis depends on Asn-74, which acts as the Proton acceptor. Residues Trp-75, Arg-77, Arg-194, and 200–202 (RIS) contribute to the substrate site. Mg(2+) is bound at residue Glu-213.

This sequence belongs to the UPP synthase family. Homodimer. The cofactor is Mg(2+).

It carries out the reaction 8 isopentenyl diphosphate + (2E,6E)-farnesyl diphosphate = di-trans,octa-cis-undecaprenyl diphosphate + 8 diphosphate. Its function is as follows. Catalyzes the sequential condensation of isopentenyl diphosphate (IPP) with (2E,6E)-farnesyl diphosphate (E,E-FPP) to yield (2Z,6Z,10Z,14Z,18Z,22Z,26Z,30Z,34E,38E)-undecaprenyl diphosphate (di-trans,octa-cis-UPP). UPP is the precursor of glycosyl carrier lipid in the biosynthesis of bacterial cell wall polysaccharide components such as peptidoglycan and lipopolysaccharide. The sequence is that of Ditrans,polycis-undecaprenyl-diphosphate synthase ((2E,6E)-farnesyl-diphosphate specific) from Buchnera aphidicola subsp. Schizaphis graminum (strain Sg).